A 396-amino-acid chain; its full sequence is Methylthioribose kinase (396 aa).

ATP-binding positions include asparagine 44, lysine 61, and 115 to 117 (EDL). Aspartate 233 serves as a coordination point for substrate. 250-252 (DPE) contacts ATP. Arginine 340 serves as a coordination point for substrate.

The protein belongs to the methylthioribose kinase family. Homodimer.

The enzyme catalyses 5-(methylsulfanyl)-D-ribose + ATP = 5-(methylsulfanyl)-alpha-D-ribose 1-phosphate + ADP + H(+). Its pathway is amino-acid biosynthesis; L-methionine biosynthesis via salvage pathway; S-methyl-5-thio-alpha-D-ribose 1-phosphate from S-methyl-5'-thioadenosine (hydrolase route): step 2/2. Catalyzes the phosphorylation of methylthioribose into methylthioribose-1-phosphate. This is Methylthioribose kinase from Geobacillus thermodenitrificans (strain NG80-2).